Here is a 447-residue protein sequence, read N- to C-terminus: Exodeoxyribonuclease 7 large subunit (447 aa).

Belongs to the XseA family. As to quaternary structure, heterooligomer composed of large and small subunits.

The protein resides in the cytoplasm. It carries out the reaction Exonucleolytic cleavage in either 5'- to 3'- or 3'- to 5'-direction to yield nucleoside 5'-phosphates.. Bidirectionally degrades single-stranded DNA into large acid-insoluble oligonucleotides, which are then degraded further into small acid-soluble oligonucleotides. The chain is Exodeoxyribonuclease 7 large subunit from Streptococcus mutans serotype c (strain ATCC 700610 / UA159).